A 380-amino-acid chain; its full sequence is 1-deoxy-D-xylulose 5-phosphate reductoisomerase 2 (380 aa).

Residues S10, G11, S12, I13, G36, K37, N38, and N120 each contribute to the NADPH site. A 1-deoxy-D-xylulose 5-phosphate-binding site is contributed by K121. E122 contributes to the NADPH binding site. Residue D146 participates in Mn(2+) binding. Residues S147, E148, S172, and H195 each contribute to the 1-deoxy-D-xylulose 5-phosphate site. E148 contacts Mn(2+). Residue G201 coordinates NADPH. Residues S208, N213, K214, and E217 each coordinate 1-deoxy-D-xylulose 5-phosphate. Residue E217 coordinates Mn(2+).

This sequence belongs to the DXR family. Requires Mg(2+) as cofactor. It depends on Mn(2+) as a cofactor.

The enzyme catalyses 2-C-methyl-D-erythritol 4-phosphate + NADP(+) = 1-deoxy-D-xylulose 5-phosphate + NADPH + H(+). Its pathway is isoprenoid biosynthesis; isopentenyl diphosphate biosynthesis via DXP pathway; isopentenyl diphosphate from 1-deoxy-D-xylulose 5-phosphate: step 1/6. Functionally, catalyzes the NADPH-dependent rearrangement and reduction of 1-deoxy-D-xylulose-5-phosphate (DXP) to 2-C-methyl-D-erythritol 4-phosphate (MEP). In Bacillus anthracis, this protein is 1-deoxy-D-xylulose 5-phosphate reductoisomerase 2.